Here is a 127-residue protein sequence, read N- to C-terminus: Multifunctional methyltransferase subunit trm112 (127 aa).

Positions 2-123 constitute a TRM112 domain; it reads KVMTLNFLTC…KNGVANFLLP (122 aa).

Belongs to the TRM112 family. As to quaternary structure, heterodimer of mtq2-rmt-1/trm112, forming the eRF1 methyltransferase. Rmt-1/trm112 is necessary for the solubility and activity of the catalytic subunit mtq2. Interacts with trm11; required for full tRNA methyltransferase activity. Interacts with bud23; required for full rRNA methyltransferase activity.

It is found in the cytoplasm. Its subcellular location is the nucleus. Its function is as follows. Acts as an activator of both rRNA/tRNA and protein methyltransferases. Together with methyltransferase mtq2, required for the methylation of eRF1 on 'Gln-182'. Together with methyltransferase trm11, required for the formation of 2-methylguanosine at position 10 (m2G10) in tRNA. Together with methyltransferase bud23, required for the formation of a 7-methylguanine in 18S rRNA. Involved in biogenesis of both 40S and 60S ribosomal subunits. The protein is Multifunctional methyltransferase subunit trm112 (rmt-1) of Neurospora crassa (strain ATCC 24698 / 74-OR23-1A / CBS 708.71 / DSM 1257 / FGSC 987).